The following is a 358-amino-acid chain: Dynein axonemal assembly factor 10 (358 aa).

6 WD repeats span residues 63 to 105 (EKKH…QPVF), 109 to 154 (AHAS…APVA), 162 to 205 (NNVR…VRWE), 207 to 249 (NVRN…PKKG), 258 to 298 (TAGA…QRKV), and 320 to 358 (ISTQ…LNKV).

Interacts with PIH1D1; the interaction associates DNAAF10 with the R2TP complex. Interacts with several dynein axonemal assembly factors.

The protein resides in the dynein axonemal particle. Its function is as follows. Key assembly factor specifically required for the stability of axonemal dynein heavy chains in cytoplasm. The chain is Dynein axonemal assembly factor 10 (dnaaf10) from Chlamydomonas reinhardtii (Chlamydomonas smithii).